A 311-amino-acid polypeptide reads, in one-letter code: Aspartate carbamoyltransferase catalytic subunit (311 aa).

Positions 55 and 56 each coordinate carbamoyl phosphate. L-aspartate is bound at residue Lys85. Carbamoyl phosphate is bound by residues Arg106, His135, and Gln138. 2 residues coordinate L-aspartate: Arg168 and Arg230. Carbamoyl phosphate is bound by residues Leu268 and Pro269.

Belongs to the aspartate/ornithine carbamoyltransferase superfamily. ATCase family. In terms of assembly, heterododecamer (2C3:3R2) of six catalytic PyrB chains organized as two trimers (C3), and six regulatory PyrI chains organized as three dimers (R2).

It catalyses the reaction carbamoyl phosphate + L-aspartate = N-carbamoyl-L-aspartate + phosphate + H(+). Its pathway is pyrimidine metabolism; UMP biosynthesis via de novo pathway; (S)-dihydroorotate from bicarbonate: step 2/3. Catalyzes the condensation of carbamoyl phosphate and aspartate to form carbamoyl aspartate and inorganic phosphate, the committed step in the de novo pyrimidine nucleotide biosynthesis pathway. This Escherichia fergusonii (strain ATCC 35469 / DSM 13698 / CCUG 18766 / IAM 14443 / JCM 21226 / LMG 7866 / NBRC 102419 / NCTC 12128 / CDC 0568-73) protein is Aspartate carbamoyltransferase catalytic subunit.